A 154-amino-acid polypeptide reads, in one-letter code: MAAARGLSLTAATQKAVTPWPRGRLLAASLGPQARREASSSSPEAGEGQIRLTDSCVQRLLEITEGSEFLRLQVEGGGCSGFQYKFSLDTVINPDDRVFEQGGARVVVDSDSLAFVKGAQVDFSQELIRSSFQVLNNPQAQQGCSCGSSFSIKL.

Residues 1–8 (MAAARGLS) constitute a mitochondrion transit peptide. The Fe cation site is built by C79, C144, and C146.

Belongs to the HesB/IscA family. In terms of assembly, heterotetramer; forms a dimer of dimers with IBA57. Interacts with [2Fe-2S]-ISCA2 forming the heterodimer [2Fe- 2S]-ISCA2-IBA57 complex; [2Fe-2S] cluster binding is absolutely required to promote the complex formation.

Its subcellular location is the mitochondrion. In terms of biological role, involved in the maturation of mitochondrial 4Fe-4S proteins functioning late in the iron-sulfur cluster assembly pathway. May be involved in the binding of an intermediate of Fe/S cluster assembly. The polypeptide is Iron-sulfur cluster assembly 2 homolog, mitochondrial (ISCA2) (Pongo abelii (Sumatran orangutan)).